The chain runs to 203 residues: Holliday junction branch migration complex subunit RuvA (203 aa).

The domain I stretch occupies residues 1–63; it reads MIGQLSGKVD…EEHIHLYGFL (63 aa). The segment at 64–142 is domain II; it reads TLEEKIFFNL…KISSGSAIIK (79 aa). The interval 143 to 149 is flexible linker; the sequence is ESLNIKN. Residues 150–203 form a domain III region; it reads ITPVASNEVIKALVNLGFSRFEAQNAVQGIITQNPEISIDELIKTALKNRNSNF.

This sequence belongs to the RuvA family. As to quaternary structure, homotetramer. Forms an RuvA(8)-RuvB(12)-Holliday junction (HJ) complex. HJ DNA is sandwiched between 2 RuvA tetramers; dsDNA enters through RuvA and exits via RuvB. An RuvB hexamer assembles on each DNA strand where it exits the tetramer. Each RuvB hexamer is contacted by two RuvA subunits (via domain III) on 2 adjacent RuvB subunits; this complex drives branch migration. In the full resolvosome a probable DNA-RuvA(4)-RuvB(12)-RuvC(2) complex forms which resolves the HJ.

The protein resides in the cytoplasm. Functionally, the RuvA-RuvB-RuvC complex processes Holliday junction (HJ) DNA during genetic recombination and DNA repair, while the RuvA-RuvB complex plays an important role in the rescue of blocked DNA replication forks via replication fork reversal (RFR). RuvA specifically binds to HJ cruciform DNA, conferring on it an open structure. The RuvB hexamer acts as an ATP-dependent pump, pulling dsDNA into and through the RuvAB complex. HJ branch migration allows RuvC to scan DNA until it finds its consensus sequence, where it cleaves and resolves the cruciform DNA. This chain is Holliday junction branch migration complex subunit RuvA, found in Rickettsia conorii (strain ATCC VR-613 / Malish 7).